The sequence spans 432 residues: Serine/threonine-protein kinase CDG1 (432 aa).

Residues Cys4 and Cys6 are each lipidated (S-palmitoyl cysteine). Residues 15-24 (LKDKSHKRSI) show a composition bias toward basic residues. Residues 15-47 (LKDKSHKRSIRNQTSSSSAQPAGTAKEVDSSSS) form a disordered region. Over residues 25-35 (RNQTSSSSAQP) the composition is skewed to polar residues. Ser44 and Ser47 each carry phosphoserine. Positions 74 to 354 (FRNESLIGRG…SQVVECLKYI (281 aa)) constitute a Protein kinase domain. ATP contacts are provided by residues 80-88 (IGRGGFGTV) and Lys102. The residue at position 147 (Tyr147) is a Phosphotyrosine. Asp200 (proton acceptor) is an active-site residue. A phosphoserine mark is found at Ser204 and Ser234. Phosphothreonine is present on residues Thr235 and Thr240. The residue at position 248 (Tyr248) is a Phosphotyrosine.

Belongs to the protein kinase superfamily. Ser/Thr protein kinase family. In terms of assembly, interacts with BSU1, BSL1 and BRI1. Post-translationally, phosphorylated at Ser-44, Ser-47 and Ser-234 by BRI1. In terms of tissue distribution, expressed at high levels in the stamen and pollen grains. Expressed at a very low level in vegetative tissues.

Its subcellular location is the cell membrane. It catalyses the reaction L-seryl-[protein] + ATP = O-phospho-L-seryl-[protein] + ADP + H(+). The enzyme catalyses L-threonyl-[protein] + ATP = O-phospho-L-threonyl-[protein] + ADP + H(+). Activated by phosphorylation at Ser-234. Functionally, serine/threonine-protein kinase involved in the positive regulation of brassinosteroid (BR) signaling and plant growth. Mediates BR signal transduction from BRI1 receptor kinase to BSU1 phosphatase. After activation by phosphorylation at Ser-234 by BRI1, CDG1 phosphorylates BSU1 at 'Ser-764' in the phosphatase domain, increasing the ability of BSU1 to inactivate the negative regulator of BR signaling ASK7/BIN2 by dephosphorylation at 'Tyr-200'. The full kinase activity of CDG1 is required for its biological function. The sequence is that of Serine/threonine-protein kinase CDG1 from Arabidopsis thaliana (Mouse-ear cress).